We begin with the raw amino-acid sequence, 417 residues long: D-amino acid dehydrogenase (417 aa).

Residue V3–W17 participates in FAD binding.

The protein belongs to the DadA oxidoreductase family. It depends on FAD as a cofactor.

The enzyme catalyses a D-alpha-amino acid + A + H2O = a 2-oxocarboxylate + AH2 + NH4(+). It functions in the pathway amino-acid degradation; D-alanine degradation; NH(3) and pyruvate from D-alanine: step 1/1. Oxidative deamination of D-amino acids. This is D-amino acid dehydrogenase from Edwardsiella ictaluri (strain 93-146).